A 319-amino-acid chain; its full sequence is Zinc finger protein C19B12.07c (319 aa).

The segment at 146–170 (FRCLCCHVPCKNKKLLREHMNNKRH) adopts a C2H2-type zinc-finger fold.

The protein belongs to the ZNF277 family.

The protein localises to the nucleus. The chain is Zinc finger protein C19B12.07c from Schizosaccharomyces pombe (strain 972 / ATCC 24843) (Fission yeast).